The following is a 661-amino-acid chain: L-type lectin-domain containing receptor kinase V.5 (661 aa).

Positions methionine 1–glycine 25 are cleaved as a signal peptide. Over tyrosine 26–leucine 282 the chain is Extracellular. Residues glutamine 30–leucine 250 are legume-lectin like. N-linked (GlcNAc...) asparagine glycans are attached at residues asparagine 45, asparagine 64, asparagine 116, asparagine 198, and asparagine 276. A helical transmembrane segment spans residues alanine 283–phenylalanine 303. The Cytoplasmic segment spans residues tyrosine 304–arginine 661. The Protein kinase domain occupies phenylalanine 338–alanine 596. Residues leucine 344–valine 352 and lysine 367 each bind ATP. Aspartate 464 functions as the Proton acceptor in the catalytic mechanism.

This sequence in the C-terminal section; belongs to the protein kinase superfamily. Ser/Thr protein kinase family. It in the N-terminal section; belongs to the leguminous lectin family. In terms of processing, autophosphorylated on a Ser residue. In terms of tissue distribution, expressed at low levels in stems, leaves, flowers and siliques.

The protein resides in the cell membrane. It carries out the reaction L-seryl-[protein] + ATP = O-phospho-L-seryl-[protein] + ADP + H(+). The enzyme catalyses L-threonyl-[protein] + ATP = O-phospho-L-threonyl-[protein] + ADP + H(+). Its function is as follows. Confers resistance to the pathogenic oomycetes Phytophthora infestans and Phytophthora capsici, but confers susceptibility to the pathogenic bacteria Pseudomonas syringae. The chain is L-type lectin-domain containing receptor kinase V.5 from Arabidopsis thaliana (Mouse-ear cress).